Reading from the N-terminus, the 609-residue chain is Alpha-fetoprotein (609 aa).

The first 18 residues, 1–18 (MKWVESIFLIFLLNFTES), serve as a signal peptide directing secretion. 3 consecutive Albumin domains span residues 19 to 210 (RTLH…ATVT), 211 to 402 (KELR…EELQ), and 403 to 601 (KYIQ…KLIS). Histidine 22 is a Cu(2+) binding site. 8 cysteine pairs are disulfide-bonded: cysteine 99–cysteine 114, cysteine 113–cysteine 124, cysteine 148–cysteine 193, cysteine 192–cysteine 201, cysteine 224–cysteine 270, cysteine 269–cysteine 277, cysteine 289–cysteine 303, and cysteine 302–cysteine 313. Serine 111, serine 115, and serine 117 each carry phosphoserine; by FAM20C. Asparagine 251 carries N-linked (GlcNAc...) asparagine glycosylation. Phosphoserine; by FAM20C is present on serine 344. Cystine bridges form between cysteine 384–cysteine 393, cysteine 416–cysteine 462, cysteine 461–cysteine 472, cysteine 485–cysteine 501, cysteine 500–cysteine 511, cysteine 538–cysteine 583, and cysteine 582–cysteine 591. Serine 444 and serine 445 each carry phosphoserine; by FAM20C.

The protein belongs to the ALB/AFP/VDB family. Dimeric and trimeric forms have been found in addition to the monomeric form. Post-translationally, independent studies suggest heterogeneity of the N-terminal sequence of the mature protein and of the cleavage site of the signal sequence. In terms of processing, sulfated. In terms of tissue distribution, plasma. Synthesized by the fetal liver and yolk sac.

It localises to the secreted. Its function is as follows. Binds copper, nickel, and fatty acids as well as, and bilirubin less well than, serum albumin. Only a small percentage (less than 2%) of the human AFP shows estrogen-binding properties. This is Alpha-fetoprotein (AFP) from Homo sapiens (Human).